Reading from the N-terminus, the 608-residue chain is CTP synthase (608 aa).

An amidoligase domain region spans residues 1–271 (MGQAHITKHI…DAYVVRRLGL (271 aa)). Ser18 provides a ligand contact to CTP. Ser18 contacts UTP. Residues 19 to 24 (SLGKGL) and Asp76 contribute to the ATP site. Residues Asp76 and Glu145 each coordinate Mg(2+). CTP is bound by residues 152–154 (DIE), 192–197 (KTKPTQ), and Lys228. Residues 192–197 (KTKPTQ) and Lys228 contribute to the UTP site. Residues 296–545 (TIAIVGKYVD…VAAAVAHADR (250 aa)) enclose the Glutamine amidotransferase type-1 domain. Gly359 lines the L-glutamine pocket. Catalysis depends on Cys386, which acts as the Nucleophile; for glutamine hydrolysis. Residues 387–390 (LGLQ), Glu410, and Arg471 each bind L-glutamine. Active-site residues include His518 and Glu520. Positions 550–608 (LPVDLPSEDAPTPENGVPENGAAQTRGVTAGRSGGSIRRGASASRPSVSSNGTAALVSP) are disordered. The segment covering 584-594 (GSIRRGASASR) has biased composition (low complexity).

Belongs to the CTP synthase family. As to quaternary structure, homotetramer.

The catalysed reaction is UTP + L-glutamine + ATP + H2O = CTP + L-glutamate + ADP + phosphate + 2 H(+). It catalyses the reaction L-glutamine + H2O = L-glutamate + NH4(+). The enzyme catalyses UTP + NH4(+) + ATP = CTP + ADP + phosphate + 2 H(+). Its pathway is pyrimidine metabolism; CTP biosynthesis via de novo pathway; CTP from UDP: step 2/2. Allosterically activated by GTP, when glutamine is the substrate; GTP has no effect on the reaction when ammonia is the substrate. The allosteric effector GTP functions by stabilizing the protein conformation that binds the tetrahedral intermediate(s) formed during glutamine hydrolysis. Inhibited by the product CTP, via allosteric rather than competitive inhibition. Its function is as follows. Catalyzes the ATP-dependent amination of UTP to CTP with either L-glutamine or ammonia as the source of nitrogen. Regulates intracellular CTP levels through interactions with the four ribonucleotide triphosphates. The sequence is that of CTP synthase from Frankia casuarinae (strain DSM 45818 / CECT 9043 / HFP020203 / CcI3).